A 1860-amino-acid chain; its full sequence is Golgi-specific brefeldin A-resistance guanine nucleotide exchange factor 1 (1860 aa).

The tract at residues 1–211 (MVDKNIYIIQ…EPKNYVGTNM (211 aa)) is DCB; DCB:DCB domain and DCB:HUS domain interaction. The tract at residues 1 to 381 (MVDKNIYIIQ…SVHDMDYVNP (381 aa)) is interaction with RAB1B. Disordered regions lie at residues 215–266 (KMRA…GGMP) and 281–372 (AASA…DSAS). Residues 227–241 (WKKQKRSPRPPRHMT) show a composition bias toward basic residues. 3 stretches are compositionally biased toward polar residues: residues 250–262 (PTPN…SNLT), 290–301 (TDSGLEFSSQTT), and 335–351 (DLQQ…SASV). Residues S350 and S353 each carry the phosphoserine modification. T508 carries the phosphothreonine modification. Residues 531 to 551 (RIPSFVTELYINYDCDYYCSN) form an HUS; DCB:HUS domain interaction region. Residues 620–631 (TREASNTERTAS) show a composition bias toward basic and acidic residues. A disordered region spans residues 620–666 (TREASNTERTASDGKAVGMASDIPGLHLPGGGRLPPEHGKSGCSDLE). S663 is subject to Phosphoserine. Positions 693-883 (ELIEIKNKKK…EDMYHAIKNE (191 aa)) constitute an SEC7 domain. The tract at residues 887 to 1371 (MPEEQTGLVR…PSRPGPSPLI (485 aa)) is phosphatidylinositol-phosphate binding; required for translocation to the leading edge and for ARF1 activation upon GPCR signaling. The span at 1285–1297 (QATARADAPDAGA) shows a compositional bias: low complexity. Positions 1285–1336 (QATARADAPDAGAQSDSELPSYHQNDVSLDRGYTSDSEVYTDHGRPGKIHRS) are disordered. Residues 1298–1311 (QSDSELPSYHQNDV) show a composition bias toward polar residues. S1299 carries the post-translational modification Phosphoserine. Y1317 bears the Phosphotyrosine mark. A phosphoserine mark is found at S1319, S1321, and S1336. T1338 carries the post-translational modification Phosphothreonine; by AMPK. Disordered regions lie at residues 1351 to 1371 (GKDD…SPLI), 1431 to 1484 (CKSQ…DEGV), and 1726 to 1809 (PMPM…QPPL). The segment covering 1433 to 1447 (SQEKRGKSHKYDSKG) has biased composition (basic and acidic residues). Over residues 1465-1474 (TSSQHASRGG) the composition is skewed to polar residues. 3 positions are modified to phosphoserine: S1476, S1774, and S1785. Residues 1775–1792 (PRAASSSSPGSPVASSPS) show a composition bias toward low complexity.

In terms of assembly, can form homodimers and probably homotetramers. Interacts with COPG1; the interaction is independent of ARF1 activation. Interacts with ARF1, ARF3, ARF4 and ARF5. Interacts with RAB1B (GTP-bound form); required for GBF1 membrane association. Interacts with GGA1, GGA2 and GGA3. Interacts with USO1. Interacts (via SEC7 domain) with PNPLA2 (via C-terminus); the interaction is direct. Interacts with ARMH3. As to quaternary structure, (Microbial infection) Interacts with poliovirus protein 3A. In terms of processing, AMPK-mediated phosphorylation at Thr-1338 is induced by 2-deoxyglucose (2-DG) and AICA ribonucleotide, and occurs during mitosis leading to membrane disassociation and inactivation of ARF1 during mitosis. Ubiquitous.

It localises to the golgi apparatus. The protein resides in the cis-Golgi network. The protein localises to the endoplasmic reticulum-Golgi intermediate compartment. Its subcellular location is the trans-Golgi network. It is found in the cytoplasm. It localises to the lipid droplet. The protein resides in the membrane. Inhibited by brefeldin A (BFA). Inhibited by golgicide A (GCA). Functionally, guanine-nucleotide exchange factor (GEF) for members of the Arf family of small GTPases involved in trafficking in the early secretory pathway; its GEF activity initiates the coating of nascent vesicles via the localized generation of activated ARFs through replacement of GDP with GTP. Recruitment to cis-Golgi membranes requires membrane association of Arf-GDP and can be regulated by ARF1, ARF3, ARF4 and ARF5. Involved in the recruitment of the COPI coat complex to the endoplasmic reticulum exit sites (ERES), and the endoplasmic reticulum-Golgi intermediate (ERGIC) and cis-Golgi compartments which implicates ARF1 activation. Involved in COPI vesicle-dependent retrograde transport from the ERGIC and cis-Golgi compartments to the endoplasmic reticulum (ER). Involved in the trans-Golgi network recruitment of GGA1, GGA2, GGA3, BIG1, BIG2, and the AP-1 adaptor protein complex related to chlathrin-dependent transport; the function requires its GEF activity (probably at least in part on ARF4 and ARF5). Has GEF activity towards ARF1. Has in vitro GEF activity towards ARF5. Involved in the processing of PSAP. Required for the assembly of the Golgi apparatus. The AMPK-phosphorylated form is involved in Golgi disassembly during mitotis and under stress conditions. May be involved in the COPI vesicle-dependent recruitment of PNPLA2 to lipid droplets; however, this function is under debate. In neutrophils, involved in G protein-coupled receptor (GPCR)-mediated chemotaxis und superoxide production. Proposed to be recruited by phosphatidylinositol-phosphates generated upon GPCR stimulation to the leading edge where it recruits and activates ARF1, and is involved in recruitment of GIT2 and the NADPH oxidase complex. Plays a role in maintaining mitochondrial morphology. The chain is Golgi-specific brefeldin A-resistance guanine nucleotide exchange factor 1 (GBF1) from Homo sapiens (Human).